The following is a 404-amino-acid chain: uncharacterized protein (404 aa).

A run of 8 helical transmembrane segments spans residues 1 to 21 (MNVL…FLFS), 32 to 52 (VIVG…WEAG), 89 to 109 (AFAL…AVLY), 182 to 202 (LFGY…SFMA), 261 to 281 (LAFV…FGLF), 285 to 305 (GVTL…LIGV), 344 to 364 (ATII…AIML), and 384 to 404 (KAVL…GMFI).

Belongs to the concentrative nucleoside transporter (CNT) (TC 2.A.41) family.

It localises to the cell membrane. This is an uncharacterized protein from Bacillus subtilis (strain 168).